The sequence spans 200 residues: Large ribosomal subunit protein uL4 (200 aa).

Positions 38-68 (GRQGSKQQKTRSDVRGGGKRPWRQKGTGRAR) are disordered. A compositionally biased stretch (basic residues) spans 54–65 (GGKRPWRQKGTG).

It belongs to the universal ribosomal protein uL4 family. Part of the 50S ribosomal subunit.

One of the primary rRNA binding proteins, this protein initially binds near the 5'-end of the 23S rRNA. It is important during the early stages of 50S assembly. It makes multiple contacts with different domains of the 23S rRNA in the assembled 50S subunit and ribosome. Its function is as follows. Forms part of the polypeptide exit tunnel. The sequence is that of Large ribosomal subunit protein uL4 from Pseudomonas fluorescens (strain SBW25).